We begin with the raw amino-acid sequence, 375 residues long: Succinyl-diaminopimelate desuccinylase (375 aa).

Residue His66 coordinates Zn(2+). The active site involves Asp68. Asp99 provides a ligand contact to Zn(2+). Glu133 functions as the Proton acceptor in the catalytic mechanism. Zn(2+) is bound by residues Glu134, Glu162, and His348.

This sequence belongs to the peptidase M20A family. DapE subfamily. Homodimer. Zn(2+) serves as cofactor. It depends on Co(2+) as a cofactor.

It carries out the reaction N-succinyl-(2S,6S)-2,6-diaminopimelate + H2O = (2S,6S)-2,6-diaminopimelate + succinate. It functions in the pathway amino-acid biosynthesis; L-lysine biosynthesis via DAP pathway; LL-2,6-diaminopimelate from (S)-tetrahydrodipicolinate (succinylase route): step 3/3. In terms of biological role, catalyzes the hydrolysis of N-succinyl-L,L-diaminopimelic acid (SDAP), forming succinate and LL-2,6-diaminopimelate (DAP), an intermediate involved in the bacterial biosynthesis of lysine and meso-diaminopimelic acid, an essential component of bacterial cell walls. In Buchnera aphidicola subsp. Acyrthosiphon pisum (strain APS) (Acyrthosiphon pisum symbiotic bacterium), this protein is Succinyl-diaminopimelate desuccinylase.